The following is a 467-amino-acid chain: tRNA modification GTPase MnmE (467 aa).

Residues Arg30, Glu92, and Arg131 each contribute to the (6S)-5-formyl-5,6,7,8-tetrahydrofolate site. The region spanning Gly226–Asn388 is the TrmE-type G domain. Position 236 (Asn236) interacts with K(+). GTP is bound by residues Asn236 to Ser241, Thr255 to Thr261, and Asp280 to Gly283. Mg(2+) is bound at residue Ser240. Residues Thr255, Leu257, and Thr260 each contribute to the K(+) site. Thr261 serves as a coordination point for Mg(2+). Lys467 serves as a coordination point for (6S)-5-formyl-5,6,7,8-tetrahydrofolate.

It belongs to the TRAFAC class TrmE-Era-EngA-EngB-Septin-like GTPase superfamily. TrmE GTPase family. As to quaternary structure, homodimer. Heterotetramer of two MnmE and two MnmG subunits. The cofactor is K(+).

The protein localises to the cytoplasm. Functionally, exhibits a very high intrinsic GTPase hydrolysis rate. Involved in the addition of a carboxymethylaminomethyl (cmnm) group at the wobble position (U34) of certain tRNAs, forming tRNA-cmnm(5)s(2)U34. The polypeptide is tRNA modification GTPase MnmE (Trichodesmium erythraeum (strain IMS101)).